We begin with the raw amino-acid sequence, 349 residues long: 5-deoxyribose 1-phosphate isomerase (349 aa).

Substrate contacts are provided by residues 49–51 (RGA), Arg-92, and Gln-199. The Proton donor role is filled by Asp-240. 250 to 251 (NK) is a binding site for substrate.

It belongs to the EIF-2B alpha/beta/delta subunits family. DrdI subfamily.

It catalyses the reaction 5-deoxy-alpha-D-ribose 1-phosphate = 5-deoxy-D-ribulose 1-phosphate. It participates in carbohydrate degradation. In terms of biological role, catalyzes the isomerization of 5-deoxy-alpha-D-ribose 1-phosphate to 5-deoxy-D-ribulose 1-phosphate, as part of a 5-deoxyribose salvage pathway that recycles this toxic radical SAM enzyme by-product to mainstream metabolites. The protein is 5-deoxyribose 1-phosphate isomerase of Clostridium botulinum (strain Langeland / NCTC 10281 / Type F).